Consider the following 41-residue polypeptide: MTTNTQYIYPIFTVRWLAVHALAVPTVFFLGSISAMQFIQR.

A helical membrane pass occupies residues 16–32 (WLAVHALAVPTVFFLGS). Residue histidine 20 coordinates heme.

This sequence belongs to the PsbE/PsbF family. In terms of assembly, heterodimer of an alpha subunit and a beta subunit. PSII is composed of 1 copy each of membrane proteins PsbA, PsbB, PsbC, PsbD, PsbE, PsbF, PsbH, PsbI, PsbJ, PsbK, PsbL, PsbM, PsbT, PsbX, PsbY, PsbZ, Psb30/Ycf12, at least 3 peripheral proteins of the oxygen-evolving complex and a large number of cofactors. It forms dimeric complexes. The cofactor is heme b.

It is found in the plastid. The protein resides in the chloroplast thylakoid membrane. Its function is as follows. This b-type cytochrome is tightly associated with the reaction center of photosystem II (PSII). PSII is a light-driven water:plastoquinone oxidoreductase that uses light energy to abstract electrons from H(2)O, generating O(2) and a proton gradient subsequently used for ATP formation. It consists of a core antenna complex that captures photons, and an electron transfer chain that converts photonic excitation into a charge separation. This is Cytochrome b559 subunit beta from Nephroselmis olivacea (Green alga).